The chain runs to 206 residues: MRPLTPRQAEILELIKRNIADTGMPPTRAEIATRLGFKSANAAEEHLKALAKKGCIEIMPGTSRGIRLPAEEEVVVEYGLPLIGQVAAGEPILAQEHVEQYYQVDPSMFHPTADFLLRVKGDSMKNIGILEGDLLAVHKVQQARNGQVVVARVDDDVTVKRFEKKGNLVYLYAENEDYSPIKVDLSCQSLTIEGLAVGVIRNGDWL.

Positions 28–48 form a DNA-binding region, H-T-H motif; sequence RAEIATRLGFKSANAAEEHLK. Catalysis depends on for autocatalytic cleavage activity residues Ser-123 and Lys-160.

It belongs to the peptidase S24 family. As to quaternary structure, homodimer.

The enzyme catalyses Hydrolysis of Ala-|-Gly bond in repressor LexA.. Functionally, represses a number of genes involved in the response to DNA damage (SOS response), including recA and lexA. In the presence of single-stranded DNA, RecA interacts with LexA causing an autocatalytic cleavage which disrupts the DNA-binding part of LexA, leading to derepression of the SOS regulon and eventually DNA repair. This Shewanella putrefaciens (strain CN-32 / ATCC BAA-453) protein is LexA repressor.